We begin with the raw amino-acid sequence, 384 residues long: S-adenosylmethionine synthase (384 aa).

Position 15 (His-15) interacts with ATP. Asp-17 is a Mg(2+) binding site. Glu-43 serves as a coordination point for K(+). Residues Glu-56 and Gln-99 each coordinate L-methionine. Positions 99–109 (QSPDINQGVDR) are flexible loop. Residues 164 to 166 (DAK), 230 to 231 (RF), Asp-239, 245 to 246 (RK), Ala-262, and Lys-266 contribute to the ATP site. Asp-239 is an L-methionine binding site. L-methionine is bound at residue Lys-270.

Belongs to the AdoMet synthase family. Homotetramer; dimer of dimers. Requires Mg(2+) as cofactor. K(+) serves as cofactor.

The protein localises to the cytoplasm. The catalysed reaction is L-methionine + ATP + H2O = S-adenosyl-L-methionine + phosphate + diphosphate. It functions in the pathway amino-acid biosynthesis; S-adenosyl-L-methionine biosynthesis; S-adenosyl-L-methionine from L-methionine: step 1/1. In terms of biological role, catalyzes the formation of S-adenosylmethionine (AdoMet) from methionine and ATP. The overall synthetic reaction is composed of two sequential steps, AdoMet formation and the subsequent tripolyphosphate hydrolysis which occurs prior to release of AdoMet from the enzyme. The protein is S-adenosylmethionine synthase of Klebsiella pneumoniae (strain 342).